A 205-amino-acid polypeptide reads, in one-letter code: Dephospho-CoA kinase (205 aa).

One can recognise a DPCK domain in the interval 5–201 (VVGLTGGIGS…QRYLQLSGNH (197 aa)). An ATP-binding site is contributed by 13–18 (GSGKTT).

Belongs to the CoaE family.

It is found in the cytoplasm. It catalyses the reaction 3'-dephospho-CoA + ATP = ADP + CoA + H(+). It functions in the pathway cofactor biosynthesis; coenzyme A biosynthesis; CoA from (R)-pantothenate: step 5/5. Catalyzes the phosphorylation of the 3'-hydroxyl group of dephosphocoenzyme A to form coenzyme A. The protein is Dephospho-CoA kinase of Shewanella oneidensis (strain ATCC 700550 / JCM 31522 / CIP 106686 / LMG 19005 / NCIMB 14063 / MR-1).